A 510-amino-acid polypeptide reads, in one-letter code: Protein disulfide-isomerase (510 aa).

An N-terminal signal peptide occupies residues 1-20 (MLRRALLCLALTALFRAGAG). In terms of domain architecture, Thioredoxin 1 spans 27 to 136 (HVLVLHKGNF…IVNWLKKRTG (110 aa)). Active-site nucleophile residues include cysteine 55 and cysteine 58. Cysteines 55 and 58 form a disulfide. Lysine 202 carries the N6-acetyllysine modification. 2 positions are modified to N6-succinyllysine: lysine 224 and lysine 273. Phosphoserine occurs at positions 333 and 359. Residues 351-477 (GKIKPHLMSQ…FKKFLESGGQ (127 aa)) form the Thioredoxin 2 domain. Active-site nucleophile residues include cysteine 399 and cysteine 402. An intrachain disulfide couples cysteine 399 to cysteine 402. The residue at position 429 (serine 429) is a Phosphoserine. Positions 473 to 510 (ESGGQDGAGDDDDLEDLEEAEEPDLEEDDDQKAVKDEL) are disordered. Residues 480-502 (AGDDDDLEDLEEAEEPDLEEDDD) are compositionally biased toward acidic residues. The Prevents secretion from ER signature appears at 507 to 510 (KDEL).

The protein belongs to the protein disulfide isomerase family. Heterodimer; heterodimerizes with the protein microsomal triglyceride transfer MTTP. Homodimer. Monomers and homotetramers may also occur. Interacts with P4HA2, forming a heterotetramer consisting of 2 alpha subunits (P4HA2) and 2 beta (P4HB), where P4HB plays the role of a structural subunit; this tetramer catalyzes the formation of 4-hydroxyproline in collagen. Also constitutes the structural subunit of the microsomal triacylglycerol transfer protein MTTP in mammalian cells. Stabilizes both enzymes and retain them in the ER without contributing to the catalytic activity. Binds UBQLN1. Interacts with ERO1B. Interacts with ILDR2. Interacts with ERN1/IRE1A (via N-terminus); the interaction is enhanced by phosphorylation of P4HB by FAM20C in response to endoplasmic reticulum stress and results in attenuation of ERN1 activity. Phosphorylation of Ser-359 by FAM20C is induced by endoplasmic reticulum stress and results in a functional switch from oxidoreductase to molecular chaperone. It also promotes interaction with ERN1.

The protein localises to the endoplasmic reticulum. It localises to the endoplasmic reticulum lumen. The protein resides in the melanosome. Its subcellular location is the cell membrane. The catalysed reaction is Catalyzes the rearrangement of -S-S- bonds in proteins.. Functionally, this multifunctional protein catalyzes the formation, breakage and rearrangement of disulfide bonds. At the cell surface, seems to act as a reductase that cleaves disulfide bonds of proteins attached to the cell. May therefore cause structural modifications of exofacial proteins. Inside the cell, seems to form/rearrange disulfide bonds of nascent proteins. At high concentrations and following phosphorylation by FAM20C, functions as a chaperone that inhibits aggregation of misfolded proteins. At low concentrations, facilitates aggregation (anti-chaperone activity). May be involved with other chaperones in the structural modification of the TG precursor in hormone biogenesis. Also acts as a structural subunit of various enzymes such as prolyl 4-hydroxylase and microsomal triacylglycerol transfer protein MTTP. Receptor for LGALS9; the interaction retains P4HB at the cell surface of Th2 T helper cells, increasing disulfide reductase activity at the plasma membrane, altering the plasma membrane redox state and enhancing cell migration. This is Protein disulfide-isomerase (P4HB) from Bos taurus (Bovine).